The sequence spans 293 residues: Aspartate carbamoyltransferase catalytic subunit (293 aa).

Residues Arg50 and Thr51 each contribute to the carbamoyl phosphate site. Position 78 (Lys78) interacts with L-aspartate. Positions 100, 127, and 130 each coordinate carbamoyl phosphate. L-aspartate-binding residues include Arg160 and Arg210. Positions 253 and 254 each coordinate carbamoyl phosphate.

Belongs to the aspartate/ornithine carbamoyltransferase superfamily. ATCase family. Heterododecamer (2C3:3R2) of six catalytic PyrB chains organized as two trimers (C3), and six regulatory PyrI chains organized as three dimers (R2).

It catalyses the reaction carbamoyl phosphate + L-aspartate = N-carbamoyl-L-aspartate + phosphate + H(+). The protein operates within pyrimidine metabolism; UMP biosynthesis via de novo pathway; (S)-dihydroorotate from bicarbonate: step 2/3. Its function is as follows. Catalyzes the condensation of carbamoyl phosphate and aspartate to form carbamoyl aspartate and inorganic phosphate, the committed step in the de novo pyrimidine nucleotide biosynthesis pathway. The chain is Aspartate carbamoyltransferase catalytic subunit from Staphylococcus aureus (strain USA300).